Consider the following 293-residue polypeptide: MADVTAKMVKELRDMTGVGMMDAKKALVKVEGDMEKAVDFLRENGMAKAAKKNDRIAAEGLANVATVGNVAAIVEVNSETDFVSKNEMFQDLVKDIATKVAENKPATMEEAMAIKTEKGTIESDLIEATTVIGEKISFRRFEVVEKADNAAFGAYLHMGGRIAVLTVIDGTTDEEVAKDVAMHIAAINPRYVNESQIPQEELEHEKAVLTEQALNEGKPANIVEKMVVGRLQKFKAEIALVDQPFVKDPDMTVEKFVASKGGEVKSFVRFEVGEGIEKREDNFADEVMSQMKN.

The tract at residues 80-83 is involved in Mg(2+) ion dislocation from EF-Tu; it reads TDFV.

Belongs to the EF-Ts family.

The protein localises to the cytoplasm. In terms of biological role, associates with the EF-Tu.GDP complex and induces the exchange of GDP to GTP. It remains bound to the aminoacyl-tRNA.EF-Tu.GTP complex up to the GTP hydrolysis stage on the ribosome. This is Elongation factor Ts from Enterococcus faecalis (strain ATCC 700802 / V583).